Here is a 426-residue protein sequence, read N- to C-terminus: Enolase (426 aa).

Gln163 is a binding site for (2R)-2-phosphoglycerate. The active-site Proton donor is the Glu205. The Mg(2+) site is built by Asp242, Glu285, and Asp312. Residues Lys337, Arg366, Ser367, and Lys388 each coordinate (2R)-2-phosphoglycerate. Catalysis depends on Lys337, which acts as the Proton acceptor.

This sequence belongs to the enolase family. Mg(2+) serves as cofactor.

It localises to the cytoplasm. The protein resides in the secreted. The protein localises to the cell surface. It catalyses the reaction (2R)-2-phosphoglycerate = phosphoenolpyruvate + H2O. It participates in carbohydrate degradation; glycolysis; pyruvate from D-glyceraldehyde 3-phosphate: step 4/5. In terms of biological role, catalyzes the reversible conversion of 2-phosphoglycerate (2-PG) into phosphoenolpyruvate (PEP). It is essential for the degradation of carbohydrates via glycolysis. The chain is Enolase from Gluconobacter oxydans (strain 621H) (Gluconobacter suboxydans).